A 263-amino-acid chain; its full sequence is Ycf3-interacting protein 1, chloroplastic (263 aa).

The transit peptide at 1 to 71 (MASNMLQLSL…VNKEEDSATY (71 aa)) directs the protein to the chloroplast. A helical membrane pass occupies residues 238–258 (ALYLVSAFPIIIGISVVLILF).

This sequence belongs to the Y3IP1/CEST family. In terms of assembly, interacts with Ycf3.

The protein resides in the plastid. It localises to the chloroplast thylakoid membrane. Nuclear genome-encoded factor that participates in photosystem I (PSI) biogenesis. Cooperates with the plastid genome-encoded protein PSI assembly Ycf3 in the assembly of stable PSI units in the thylakoid membrane. The sequence is that of Ycf3-interacting protein 1, chloroplastic from Nicotiana tabacum (Common tobacco).